Reading from the N-terminus, the 341-residue chain is DNA-directed RNA polymerase subunit alpha (341 aa).

The alpha N-terminal domain (alpha-NTD) stretch occupies residues 1–223 (MEQKRPQLKA…DELSVFGNVE (223 aa)). The alpha C-terminal domain (alpha-CTD) stretch occupies residues 268-341 (PQPFPTDQDT…LAQFGLALRD (74 aa)).

Belongs to the RNA polymerase alpha chain family. As to quaternary structure, homodimer. The RNAP catalytic core consists of 2 alpha, 1 beta, 1 beta' and 1 omega subunit. When a sigma factor is associated with the core the holoenzyme is formed, which can initiate transcription.

It catalyses the reaction RNA(n) + a ribonucleoside 5'-triphosphate = RNA(n+1) + diphosphate. Its function is as follows. DNA-dependent RNA polymerase catalyzes the transcription of DNA into RNA using the four ribonucleoside triphosphates as substrates. The sequence is that of DNA-directed RNA polymerase subunit alpha from Deinococcus radiodurans (strain ATCC 13939 / DSM 20539 / JCM 16871 / CCUG 27074 / LMG 4051 / NBRC 15346 / NCIMB 9279 / VKM B-1422 / R1).